A 387-amino-acid polypeptide reads, in one-letter code: Deoxyhypusine synthase (387 aa).

NAD(+)-binding positions include 108-112 (SNLIS), 134-136 (SAG), E140, and D257. Residue 139–140 (EE) coordinates spermidine. Spermidine is bound at residue D262. G304 lines the NAD(+) pocket. Spermidine is bound at residue H309. 329–330 (TG) serves as a coordination point for NAD(+). Residues 335-337 (GSD) and 344-350 (EAVSWGK) each bind spermidine. K350 serves as the catalytic Nucleophile. 363–364 (DV) lines the NAD(+) pocket.

This sequence belongs to the deoxyhypusine synthase family. Homotetramer. NAD(+) serves as cofactor.

The catalysed reaction is [eIF5A protein]-L-lysine + spermidine = [eIF5A protein]-deoxyhypusine + propane-1,3-diamine. Its pathway is protein modification; eIF5A hypusination. Its function is as follows. Catalyzes the NAD-dependent oxidative cleavage of spermidine and the subsequent transfer of the butylamine moiety of spermidine to the epsilon-amino group of a specific lysine residue of the eIF-5A precursor protein to form the intermediate deoxyhypusine residue. In Saccharomyces cerevisiae (strain ATCC 204508 / S288c) (Baker's yeast), this protein is Deoxyhypusine synthase.